The following is a 204-amino-acid chain: MLKLTPRQAEILAFIKRCLEDNGYPPTRAEIAQELGFKSPNAAEEHLKALARKGAIEMTPGASRGIRIPGFEPGAANEDEGLPVIGRVAAGAPILAQQHVEESCQINPAFFHPKADYLLRVRGMSMKDIGIFDGDLLAVHTTREARNGQIVVARLDDEVTVKRFKREGNKVWLIAENPEFAPIEVDLEQQDLVIEGLSVGVIRR.

The segment at residues 28–48 is a DNA-binding region (H-T-H motif); that stretch reads RAEIAQELGFKSPNAAEEHLK. Residues Ser125 and Lys162 each act as for autocatalytic cleavage activity in the active site.

This sequence belongs to the peptidase S24 family. Homodimer.

The enzyme catalyses Hydrolysis of Ala-|-Gly bond in repressor LexA.. Functionally, represses a number of genes involved in the response to DNA damage (SOS response), including recA and lexA. In the presence of single-stranded DNA, RecA interacts with LexA causing an autocatalytic cleavage which disrupts the DNA-binding part of LexA, leading to derepression of the SOS regulon and eventually DNA repair. The sequence is that of LexA repressor from Ectopseudomonas mendocina (strain ymp) (Pseudomonas mendocina).